Reading from the N-terminus, the 29-residue chain is Acidic phospholipase A2 Omo-E6 (29 aa).

Positions 27 and 29 each coordinate Ca(2+).

It depends on Ca(2+) as a cofactor. Expressed by the venom gland.

It is found in the secreted. The enzyme catalyses a 1,2-diacyl-sn-glycero-3-phosphocholine + H2O = a 1-acyl-sn-glycero-3-phosphocholine + a fatty acid + H(+). Snake venom phospholipase A2 (PLA2) that inhibits the ADP- and collagen-induced human platelet aggregation. Exhibits strong hydrolytic activities and prefers the anionic micelles (dPPC with deoxycholate) to the zwitterionic micelles (dPPC with Triton X-100). PLA2 catalyzes the calcium-dependent hydrolysis of the 2-acyl groups in 3-sn-phosphoglycerides. This is Acidic phospholipase A2 Omo-E6 from Ovophis monticola (Chinese mountain pitviper).